The following is a 492-amino-acid chain: Glutamate--cysteine ligase A, chloroplastic (492 aa).

A disulfide bridge links Cys-156 with Cys-376.

The protein belongs to the carboxylate-amine ligase family. Glutamate--cysteine ligase type 2 subfamily. In terms of assembly, homodimer or monomer when oxidized or reduced, respectively. Post-translationally, the Cys-156-Cys-376 disulfide bridge is known to modulate the enzyme activity according to the redox status. The oxidized form constitutes the active enzyme.

It is found in the plastid. Its subcellular location is the chloroplast. The enzyme catalyses L-cysteine + L-glutamate + ATP = gamma-L-glutamyl-L-cysteine + ADP + phosphate + H(+). It functions in the pathway sulfur metabolism; glutathione biosynthesis; glutathione from L-cysteine and L-glutamate: step 1/2. This chain is Glutamate--cysteine ligase A, chloroplastic (GSH1-1), found in Oryza sativa subsp. japonica (Rice).